Consider the following 341-residue polypeptide: L-threonine 3-dehydrogenase (341 aa).

Cysteine 38 serves as a coordination point for Zn(2+). Residues threonine 40 and histidine 43 each act as charge relay system in the active site. The Zn(2+) site is built by histidine 63, glutamate 64, cysteine 93, cysteine 96, cysteine 99, and cysteine 107. NAD(+) contacts are provided by residues isoleucine 175, aspartate 195, arginine 200, 262 to 264 (LGI), and 286 to 287 (IY).

The protein belongs to the zinc-containing alcohol dehydrogenase family. In terms of assembly, homotetramer. The cofactor is Zn(2+).

It is found in the cytoplasm. It catalyses the reaction L-threonine + NAD(+) = (2S)-2-amino-3-oxobutanoate + NADH + H(+). The protein operates within amino-acid degradation; L-threonine degradation via oxydo-reductase pathway; glycine from L-threonine: step 1/2. Catalyzes the NAD(+)-dependent oxidation of L-threonine to 2-amino-3-ketobutyrate. This Shewanella sp. (strain W3-18-1) protein is L-threonine 3-dehydrogenase.